The chain runs to 439 residues: MEAIRKQAAKLREQVARQQQAVLKHLGHVNADAVVVDEEELHCHQKLQDLYSSTKAAKRLQRNIVRGLEGFIATGTKVVEIGLKFAEDFKKYGDENPDANTPLSRVAHHFGTSYKSVEGERETLLGVLSEQVCEPIRTMIYSAPLEDARHLVNHYDRLRQEVEAQATDVLRRRSKLKESDISEEAYIKLKNSESRLAELKSSMKTLGKEATKAMLEVDDQQQNVTSQRLRALVEAERSYHRNALDILDKLHSEMIAEEEAIGSSPKSLPLHIEDSASLPQQEPNSNSSGEIKSNPLGKIKASRREEIKSNPQEVTKPSPKDEMKSSPQEETKSNHQKEIKSSPQEEIKKSNGSDDHHNHQLLSQNDSYFLAKVVHPFDAQAPGELSLAVDDYVIVRQVAGTGWSEGEYKGKAGWFPSAYVEKQEKAPASKIVESNSKQQ.

Positions 32 to 263 (DAVVVDEEEL…MIAEEEAIGS (232 aa)) constitute a BAR domain. Positions 277-291 (SLPQQEPNSNSSGEI) are enriched in polar residues. Residues 277–362 (SLPQQEPNSN…SDDHHNHQLL (86 aa)) form a disordered region. Residues 318-358 (SPKDEMKSSPQEETKSNHQKEIKSSPQEEIKKSNGSDDHHN) are compositionally biased toward basic and acidic residues. The 60-residue stretch at 366–425 (DSYFLAKVVHPFDAQAPGELSLAVDDYVIVRQVAGTGWSEGEYKGKAGWFPSAYVEKQEK) folds into the SH3 domain.

In terms of assembly, interacts with the auxilin-like protein AUXI1. In terms of tissue distribution, highly expressed in flowers. Detected in seedlings, roots, leaves and stems.

It is found in the cytoplasmic vesicle. The protein resides in the clathrin-coated vesicle. Its subcellular location is the cell membrane. It localises to the golgi apparatus. The protein localises to the trans-Golgi network. It is found in the endoplasmic reticulum. Its function is as follows. Lipid binding protein bound strongly to phosphatidic acid, phosphatidylinositol-4-phosphate and phosphatidylinositol-4,5-bisphosphate. Binds actin in vitro. Involved in trafficking and modification of clathrin-coated vesicles. This is SH3 domain-containing protein 1 (SH3P1) from Arabidopsis thaliana (Mouse-ear cress).